The following is a 113-amino-acid chain: Colipase (113 aa).

The signal sequence occupies residues 1-18 (MEKVLVLLLVSLLAVAYA). Positions 19–23 (APGPR) are cleaved as a propeptide — enterostatin, activation peptide. 5 disulfide bridges follow: Cys-35–Cys-46, Cys-41–Cys-57, Cys-45–Cys-79, Cys-67–Cys-87, and Cys-81–Cys-105.

The protein belongs to the colipase family. Forms a 1:1 stoichiometric complex with pancreatic lipase. In terms of tissue distribution, expressed by the pancreas.

It is found in the secreted. Functionally, colipase is a cofactor of pancreatic lipase. It allows the lipase to anchor itself to the lipid-water interface. Without colipase the enzyme is washed off by bile salts, which have an inhibitory effect on the lipase. Its function is as follows. Enterostatin has a biological activity as a satiety signal. The polypeptide is Colipase (Mus musculus (Mouse)).